The following is a 221-amino-acid chain: GFP-like non-fluorescent chromoprotein (221 aa).

The 2-iminomethyl-5-imidazolinone (Gln-Gly) cross-link spans 62 to 64 (QYG). Tyr63 carries the (E)-2,3-didehydrotyrosine modification.

This sequence belongs to the GFP family. In terms of assembly, homotetramer. Post-translationally, contains a chromophore consisting of modified amino acid residues. The chromophore is formed by autocatalytic backbone condensation between Xaa-N and Gly-(N+2), oxidation of Tyr-(N+1) to didehydrotyrosine, and formation of a double bond to the alpha-amino nitrogen of residue Xaa-N. Maturation of the chromophore requires nothing other than molecular oxygen.

Functionally, thought to play a role in photoprotection of the coral's resident symbiont microalgae's photosystems from photoinhibition caused by high light levels found near the surface of coral reefs. This is GFP-like non-fluorescent chromoprotein from Montipora efflorescens (Pore coral).